The sequence spans 207 residues: Large ribosomal subunit protein bL25 (207 aa).

Residues 1–20 (MANHQIKAQRRKDEGKGASR) form a disordered region.

The protein belongs to the bacterial ribosomal protein bL25 family. CTC subfamily. In terms of assembly, part of the 50S ribosomal subunit; part of the 5S rRNA/L5/L18/L25 subcomplex. Contacts the 5S rRNA. Binds to the 5S rRNA independently of L5 and L18.

Its function is as follows. This is one of the proteins that binds to the 5S RNA in the ribosome where it forms part of the central protuberance. The protein is Large ribosomal subunit protein bL25 of Xylella fastidiosa (strain M23).